Here is a 276-residue protein sequence, read N- to C-terminus: Elongation factor Ts (276 aa).

Residues 80–83 are involved in Mg(2+) ion dislocation from EF-Tu; it reads TDFV.

It belongs to the EF-Ts family.

Its subcellular location is the cytoplasm. Functionally, associates with the EF-Tu.GDP complex and induces the exchange of GDP to GTP. It remains bound to the aminoacyl-tRNA.EF-Tu.GTP complex up to the GTP hydrolysis stage on the ribosome. The protein is Elongation factor Ts of Kocuria rhizophila (strain ATCC 9341 / DSM 348 / NBRC 103217 / DC2201).